A 292-amino-acid polypeptide reads, in one-letter code: Peroxisomal 2,4-dienoyl-CoA reductase [(3E)-enoyl-CoA-producing] (292 aa).

NADP(+)-binding positions include 35 to 40 (GGGSGI), 60 to 64 (RSLPR), and D86. Residue R60 participates in substrate binding. Substrate-binding positions include R88, F118, and 126 to 128 (SFN). K151 carries the post-translational modification N6-acetyllysine. NADP(+) is bound by residues K182 and 208–214 (PGAISGT). Residue R219 coordinates substrate. S287 bears the Phosphoserine mark. The short motif at 290–292 (AKL) is the Microbody targeting signal element. N6-acetyllysine is present on K291.

This sequence belongs to the short-chain dehydrogenases/reductases (SDR) family. 2,4-dienoyl-CoA reductase subfamily. Monomer, dimer and oligomer.

Its subcellular location is the peroxisome. The catalysed reaction is a (2E,4Z)-dienoyl-CoA + NADPH + H(+) = a 4,5-saturated-(3E)-enoyl-CoA + NADP(+). It catalyses the reaction a (2E,4E)-dienoyl-CoA + NADPH + H(+) = a 4,5-saturated-(3E)-enoyl-CoA + NADP(+). The enzyme catalyses (2E,4E)-hexadienoyl-CoA + NADPH + H(+) = (3E)-hexenoyl-CoA + NADP(+). It carries out the reaction (2E,4E)-decadienoyl-CoA + NADPH + H(+) = (3E)-decenoyl-CoA + NADP(+). The catalysed reaction is (2E,4Z,7Z,10Z,13Z,16Z,19Z)-docosaheptaenoyl-CoA + NADPH + H(+) = (3E,7Z,10Z,13Z,16Z,19Z)-docosahexaenoyl-CoA + NADP(+). Auxiliary enzyme of beta-oxidation. Participates in the degradation of unsaturated fatty enoyl-CoA esters having double bonds in both even- and odd-numbered positions in peroxisome. Catalyzes the NADP-dependent reduction of 2,4-dienoyl-CoA to yield trans-3-enoyl-CoA. Has activity towards short and medium chain 2,4-dienoyl-CoAs, but also towards 2,4,7,10,13,16,19-docosaheptaenoyl-CoA, suggesting that it does not constitute a rate limiting step in the peroxisomal degradation of docosahexaenoic acid. In Rattus norvegicus (Rat), this protein is Peroxisomal 2,4-dienoyl-CoA reductase [(3E)-enoyl-CoA-producing] (Decr2).